The primary structure comprises 219 residues: Glutathione S-transferase-like protein LUC7 (219 aa).

The GST N-terminal domain maps to 3–84 (PFGRLYSFMP…YLAQSGPYSE (82 aa)). A GST C-terminal domain is found at 90-219 (DAATSAKIRQ…NLIDVKRVHE (130 aa)).

It belongs to the GST superfamily.

Its function is as follows. Glutathione S-transferase-like protein; part of the gene cluster that mediates the biosynthesis of the mycotoxin lucilactaene and the lucilactaene-related compound NG-391 that act as cell cycle inhibitors with potent growth inhibitory activity against malarial parasites, moderate growth inhibitory activity against cancer cells, and no activity against bacteria and fungi. Within the cluster, LUC7 and LUC8 encode proteins which are not commonly involved in the biosynthesis of secondary metabolites and are not essential for lucilactaene biosynthesis. In Fusarium sp, this protein is Glutathione S-transferase-like protein LUC7.